A 392-amino-acid polypeptide reads, in one-letter code: Formate-dependent phosphoribosylglycinamide formyltransferase (392 aa).

Residues 22 to 23 (EL) and Glu-82 contribute to the N(1)-(5-phospho-beta-D-ribosyl)glycinamide site. Residues Arg-114, Lys-155, 160 to 165 (SSGKGQ), 195 to 198 (EGVV), and Glu-203 each bind ATP. One can recognise an ATP-grasp domain in the interval 119–308 (RLAAEELQLP…EFALHVRAFL (190 aa)). Residues Glu-267 and Glu-279 each contribute to the Mg(2+) site. Residues Asp-286, Lys-355, and 362-363 (RR) contribute to the N(1)-(5-phospho-beta-D-ribosyl)glycinamide site.

This sequence belongs to the PurK/PurT family. As to quaternary structure, homodimer.

It catalyses the reaction N(1)-(5-phospho-beta-D-ribosyl)glycinamide + formate + ATP = N(2)-formyl-N(1)-(5-phospho-beta-D-ribosyl)glycinamide + ADP + phosphate + H(+). The protein operates within purine metabolism; IMP biosynthesis via de novo pathway; N(2)-formyl-N(1)-(5-phospho-D-ribosyl)glycinamide from N(1)-(5-phospho-D-ribosyl)glycinamide (formate route): step 1/1. Involved in the de novo purine biosynthesis. Catalyzes the transfer of formate to 5-phospho-ribosyl-glycinamide (GAR), producing 5-phospho-ribosyl-N-formylglycinamide (FGAR). Formate is provided by PurU via hydrolysis of 10-formyl-tetrahydrofolate. This Shigella boydii serotype 18 (strain CDC 3083-94 / BS512) protein is Formate-dependent phosphoribosylglycinamide formyltransferase.